Reading from the N-terminus, the 226-residue chain is UPF0758 protein Sca_1264 (226 aa).

In terms of domain architecture, MPN spans 102-224 (KITSPQDAAD…YLSMVEGGYF (123 aa)). 3 residues coordinate Zn(2+): histidine 173, histidine 175, and aspartate 186. The short motif at 173 to 186 (HNHPSGDVTPSKED) is the JAMM motif element.

This sequence belongs to the UPF0758 family.

This Staphylococcus carnosus (strain TM300) protein is UPF0758 protein Sca_1264.